A 965-amino-acid chain; its full sequence is Collagen alpha-1(I) chain (965 aa).

A disordered region spans residues 1 to 965; it reads GGISVPGPMG…PGPPGPPGPP (965 aa). Pro-18, Pro-21, Pro-23, Pro-32, Pro-35, Pro-38, Pro-53, Pro-68, Pro-74, Pro-83, and Pro-89 each carry 4-hydroxyproline. Over residues 26–44 the composition is skewed to low complexity; that stretch reads QGFQGPPGEPGEPGSSGPM. Basic and acidic residues predominate over residues 56 to 70; that stretch reads NGDDGEAGKPGRPGE. Lys-92 carries the 5-hydroxylysine; alternate modification. Lys-92 is a glycosylation site (O-linked (Gal...) hydroxylysine; alternate). A Phosphoserine modification is found at Ser-98. Residues 106-122 are compositionally biased toward low complexity; that stretch reads DAGPAGPKGEPGSPGEN. Pro-116, Pro-119, Pro-125, Pro-139, Pro-160, Pro-169, Pro-172, Pro-199, Pro-202, Pro-214, Pro-220, Pro-229, Pro-235, Pro-238, and Pro-253 each carry 4-hydroxyproline. Residues 139 to 157 are compositionally biased toward low complexity; it reads PGASGPAGARGNDGATGAA. Pro residues predominate over residues 159–171; the sequence is PPGPTGPAGPPGF. Low complexity predominate over residues 205 to 244; that stretch reads AGAAGPAGNPGADGQPGAKGANGAPGIAGAPGFPGARGPS. Lys-256 bears the 5-hydroxylysine mark. Pro-262, Pro-265, Pro-269, Pro-278, Pro-293, Pro-299, Pro-308, and Pro-314 each carry 4-hydroxyproline. Gly residues predominate over residues 303-312; the sequence is GERGGPGSRG. The residue at position 323 (Lys-323) is a 5-hydroxylysine. 4-hydroxyproline occurs at positions 326, 332, 338, 347, 350, 359, 368, 374, 386, 395, 404, 407, 425, 442, 448, 454, 460, 466, 472, 484, 493, 506, 512, and 521. A compositionally biased stretch (low complexity) spans 341-367; sequence KGLTGSPGSPGPDGKTGPPGPAGQDGR. A compositionally biased stretch (low complexity) spans 376-395; sequence ARGQAGVMGFPGPKGAAGEP. Positions 454-463 are enriched in low complexity; the sequence is PGEAGKPGEQ. Residue Lys-533 is modified to 5-hydroxylysine. 4-hydroxyproline is present on residues Pro-539, Pro-554, and Pro-560. Residues 566 to 580 show a composition bias toward low complexity; the sequence is SGPSGPAGPTGARGA. Ser-569 bears the Phosphoserine mark. 4-hydroxyproline occurs at positions 581, 587, 590, 599, 605, 623, 632, and 641. Residues 593-620 show a composition bias toward low complexity; that stretch reads AGFAGPPGADGQPGAKGEPGDAGAKGDA. Lys-644 is subject to 5-hydroxylysine. Residues 649-665 are compositionally biased toward low complexity; the sequence is SAGPPGATGFPGAAGRV. 2 positions are modified to 4-hydroxyproline: Pro-653 and Pro-659. Pro-667 carries the post-translational modification 3-hydroxyproline. Pro-668, Pro-677, Pro-680, Pro-716, Pro-725, Pro-743, Pro-752, Pro-755, Pro-761, Pro-776, Pro-782, Pro-788, Pro-796, and Pro-802 each carry 4-hydroxyproline. The span at 710-725 shows a compositional bias: low complexity; that stretch reads SGEKGSPGADGPAGAP. Positions 775–785 are enriched in pro residues; the sequence is PPGPMGPPGLA. Lys-811 bears the 5-hydroxylysine mark. 4-hydroxyproline occurs at positions 819, 822, and 825. A compositionally biased stretch (pro residues) spans 819 to 831; the sequence is PGAPGAPGAPGPV. Residues 851–865 show a composition bias toward low complexity; it reads AGPAGARGPAGPQGP. Basic and acidic residues predominate over residues 866-880; it reads RGDKGETGEQGDRGI. Lys-869 carries the post-translational modification 5-hydroxylysine. Lys-881 is subject to 5-hydroxylysine; alternate. Lys-881 carries an O-linked (Gal...) hydroxylysine; alternate glycan. 4-hydroxyproline is present on residues Pro-896, Pro-899, Pro-917, and Pro-932. The segment covering 899–932 has biased composition (low complexity); sequence PGEQGPSGASGPAGPRGPPGSAGSPGKDGLNGLP. Residue Pro-937 is modified to 3-hydroxyproline. 4-hydroxyproline is present on Pro-938. Pro residues predominate over residues 950 to 965; sequence VGPPGPPGPPGPPGPP. Position 952 is a 3-hydroxyproline (Pro-952). Pro-953 bears the 4-hydroxyproline mark. Pro-955 is subject to 3-hydroxyproline. Pro-956 bears the 4-hydroxyproline mark. The residue at position 958 (Pro-958) is a 3-hydroxyproline. 3 positions are modified to 4-hydroxyproline: Pro-959, Pro-962, and Pro-965.

It belongs to the fibrillar collagen family. In terms of assembly, trimers of one alpha 2(I) and two alpha 1(I) chains. Contains mostly 4-hydroxyproline. Proline residues at the third position of the tripeptide repeating unit (G-X-Y) are hydroxylated in some or all of the chains. In terms of processing, contains 3-hydroxyproline at a few sites. This modification occurs on the first proline residue in the sequence motif Gly-Pro-Hyp, where Hyp is 4-hydroxyproline. Post-translationally, lysine residues at the third position of the tripeptide repeating unit (G-X-Y) are 5-hydroxylated in some or all of the chains. O-glycosylated on hydroxylated lysine residues. The O-linked glycan consists of a Glc-Gal disaccharide. In terms of tissue distribution, expressed in bones.

The protein localises to the secreted. It localises to the extracellular space. The protein resides in the extracellular matrix. Functionally, type I collagen is a member of group I collagen (fibrillar forming collagen). The chain is Collagen alpha-1(I) chain from Acratocnus sp. (strain SLP-2019) (Ground sloth).